The sequence spans 229 residues: Glutathione S-transferase 1 (229 aa).

One can recognise a GST N-terminal domain in the interval 2-86 (AQFTLWSHAH…YLADKYDTER (85 aa)). One can recognise a GST C-terminal domain in the interval 93-229 (DHPEYYKVIQ…FEERSKALDN (137 aa)).

The protein belongs to the GST superfamily.

The catalysed reaction is RX + glutathione = an S-substituted glutathione + a halide anion + H(+). In terms of biological role, involved in the oxidative stress response and detoxification. This chain is Glutathione S-transferase 1 (gst1), found in Schizosaccharomyces pombe (strain 972 / ATCC 24843) (Fission yeast).